The following is a 238-amino-acid chain: uncharacterized protein (238 aa).

2 disordered regions span residues 123–167 (FRQG…VHGG) and 180–238 (SAMG…AKRR). Residues 152–161 (SGHSPSPGRH) are compositionally biased toward low complexity. Residues 207-238 (HRGHGHRFRLLAPRSRPRQRRGGGSRAAAKRR) show a composition bias toward basic residues.

This sequence belongs to the PNP/MTAP phosphorylase family.

This is an uncharacterized protein from Rhodospirillum rubrum.